A 265-amino-acid chain; its full sequence is Transcriptional activator TAF-1 (265 aa).

Disordered regions lie at residues 1 to 133 and 167 to 218; these read AHGG…SEKA and THLK…KQAE. Low complexity predominate over residues 35 to 46; the sequence is ASLSLDASAKSS. Composition is skewed to basic and acidic residues over residues 103–115 and 191–209; these read RETT…DSKS and NERE…ESAR. Residues 194-257 enclose the bZIP domain; it reads ELKREKRKQS…EKLKLENAAL (64 aa). The tract at residues 196–215 is basic motif; that stretch reads KREKRKQSNRESARRSRLRK. The tract at residues 222-257 is leucine-zipper; sequence LAIRVQSLTAENMTLKSEINKLMENSEKLKLENAAL.

The protein belongs to the bZIP family. Present mainly in roots. Barely detectable in stems and leaves.

The protein localises to the nucleus. Trans-activator of a beta-glucuronidase (GUS) reporter gene. Binds to a G-box-related element, (5'-GCAACGTGGC-3'). Also binds to the HEX-motif of wheat histone H3 promoter. This is Transcriptional activator TAF-1 (TAF1) from Nicotiana tabacum (Common tobacco).